A 275-amino-acid chain; its full sequence is Axoneme-associated protein mst101(3) (275 aa).

Repeat copies occupy residues 64–79 (KKKC…EAAE), 80–95 (KKKC…EAAE), 96–111 (KKKC…EAAQ), 112–127 (KKKC…EAAE), 128–143 (KKKC…EAAE), 144–159 (RKKC…CEEA), 160–175 (AKKK…LQQK), 181–196 (KKEK…EEAA), 197–212 (KKKA…AEEV), 215–230 (KKKA…CAEA), 231–246 (KKKA…CEEA), and 249–264 (KKMC…CAEA). The segment at 64 to 264 (KKKCAEAAKK…AALQKKCAEA (201 aa)) is 12 X 16 AA tandem repeats of [KRA]-K-[KEM]-[CKA]-[AEKD]-[EA]-[ALE]-[AMK]-[FKAML]-[KQA]-[EQKA]-[KQCEM]-[ECLA]-[AEQ]-[AEQ]-[EQAKV].

As to expression, testis.

The protein localises to the cytoplasm. Functionally, possible structural role in the sperm tail. The chain is Axoneme-associated protein mst101(3) (mst101(3)) from Drosophila hydei (Fruit fly).